A 498-amino-acid chain; its full sequence is ATP synthase subunit beta, chloroplastic (498 aa).

172-179 (GGAGVGKT) lines the ATP pocket.

This sequence belongs to the ATPase alpha/beta chains family. In terms of assembly, F-type ATPases have 2 components, CF(1) - the catalytic core - and CF(0) - the membrane proton channel. CF(1) has five subunits: alpha(3), beta(3), gamma(1), delta(1), epsilon(1). CF(0) has four main subunits: a(1), b(1), b'(1) and c(9-12).

The protein resides in the plastid. It is found in the chloroplast thylakoid membrane. The catalysed reaction is ATP + H2O + 4 H(+)(in) = ADP + phosphate + 5 H(+)(out). Produces ATP from ADP in the presence of a proton gradient across the membrane. The catalytic sites are hosted primarily by the beta subunits. The sequence is that of ATP synthase subunit beta, chloroplastic from Vitis vinifera (Grape).